The primary structure comprises 1213 residues: A disintegrin and metalloproteinase with thrombospondin motifs 19 (1213 aa).

The first 27 residues, 1-27 (MGKNREMRLTHICCCCLLYQLGFLSNG), serve as a signal peptide directing secretion. Residues 28–322 (IVSELQFAPD…KIAESGRGKR (295 aa)) constitute a propeptide that is removed on maturation. Disordered stretches follow at residues 49–161 (WRRE…PPPA) and 192–215 (FLAP…AASA). Residues 52–71 (EPVDPAGGSGGSADPGWVRG) are compositionally biased toward gly residues. The segment covering 110-119 (RPPPPSEGEE) has biased composition (acidic residues). Residues 120–139 (DEELESQELPRGSSGAAALS) are compositionally biased toward low complexity. Positions 140-155 (PGAPASWQPPPPPQPP) are enriched in pro residues. Asparagine 266 carries N-linked (GlcNAc...) asparagine glycosylation. Positions 298 to 305 (HYCGIISD) match the Cysteine switch motif. Cysteine 300 provides a ligand contact to Zn(2+). The region spanning 331-551 (YNIETVVVAD…KASNCLLQTN (221 aa)) is the Peptidase M12B domain. 11 disulfides stabilise this stretch: cysteine 407–cysteine 472, cysteine 447–cysteine 454, cysteine 466–cysteine 546, cysteine 505–cysteine 530, cysteine 575–cysteine 599, cysteine 586–cysteine 607, cysteine 594–cysteine 626, cysteine 620–cysteine 631, cysteine 651–cysteine 686, cysteine 655–cysteine 691, and cysteine 666–cysteine 676. Histidine 488 lines the Zn(2+) pocket. The active site involves glutamate 489. The Zn(2+) site is built by histidine 492 and histidine 498. The 88-residue stretch at 552 to 639 (PQSVNSVMVP…ECTSRTSAPE (88 aa)) folds into the Disintegrin domain. Residues 640–692 (HLAGEWSLWSPCSRTCSAGISSRERKCPGLDSEARDCNGPRKQYRICENPPCP) form the TSP type-1 1 domain. Residues 797 to 920 (IIKGDFNHTR…PENQSSKAPE (124 aa)) form a spacer region. Residues asparagine 803, asparagine 913, asparagine 955, and asparagine 1015 are each glycosylated (N-linked (GlcNAc...) asparagine). 4 consecutive TSP type-1 domains span residues 921–981 (PLFM…NEQP), 982–1043 (CQTR…QDCM), 1045–1089 (VWEA…EDCE), and 1093–1150 (KCYV…QPCN). Intrachain disulfides connect cysteine 994/cysteine 1037, cysteine 998/cysteine 1042, and cysteine 1009/cysteine 1026. Positions 1166-1205 (LTFKCLGDQWPVYCRVIREKNLCQDMRWYQRCCETCRDFY) constitute a PLAC domain.

The cofactor is Zn(2+). The precursor is cleaved by a furin endopeptidase. In terms of processing, glycosylated. Can be O-fucosylated by POFUT2 on a serine or a threonine residue found within the consensus sequence C1-X(2)-(S/T)-C2-G of the TSP type-1 repeat domains where C1 and C2 are the first and second cysteine residue of the repeat, respectively. Fucosylated repeats can then be further glycosylated by the addition of a beta-1,3-glucose residue by the glucosyltransferase, B3GALTL. Fucosylation mediates the efficient secretion of ADAMTS family members. Can also be C-glycosylated with one or two mannose molecules on tryptophan residues within the consensus sequence W-X-X-W of the TPRs, and N-glycosylated. These other glycosylations can also facilitate secretion. Expressed in fetal lung, but not in any adult tissues examined. Expression was detected in an osteosarcoma cDNA library.

It localises to the secreted. It is found in the extracellular space. The protein localises to the extracellular matrix. In Homo sapiens (Human), this protein is A disintegrin and metalloproteinase with thrombospondin motifs 19 (ADAMTS19).